The chain runs to 446 residues: Glucose transporter GlcP (446 aa).

Residues methionine 1–tyrosine 6 are Cytoplasmic-facing. A helical transmembrane segment spans residues leucine 7 to leucine 31. The Extracellular portion of the chain corresponds to phenylalanine 32–proline 38. A helical membrane pass occupies residues leucine 39–proline 64. Residues leucine 65–glycine 70 lie on the Cytoplasmic side of the membrane. A helical membrane pass occupies residues arginine 71 to alanine 90. The Extracellular portion of the chain corresponds to alanine 91 to asparagine 94. Residues leucine 95–glutamate 122 traverse the membrane as a helical segment. The Cytoplasmic portion of the chain corresponds to methionine 123–arginine 129. Residues glycine 130–tyrosine 152 form a helical membrane-spanning segment. The Extracellular segment spans residues alanine 153–phenylalanine 154. Residues alanine 155 to phenylalanine 180 traverse the membrane as a helical segment. Residues methionine 181–proline 234 lie on the Cytoplasmic side of the membrane. The chain crosses the membrane as a helical span at residues tryptophan 235 to alanine 269. Residues glycine 270 to glycine 272 lie on the Extracellular side of the membrane. Residues glutamate 273–isoleucine 295 form a helical membrane-spanning segment. Topologically, residues phenylalanine 296–arginine 303 are cytoplasmic. A helical transmembrane segment spans residues lysine 304–leucine 324. Topologically, residues isoleucine 325–glycine 329 are extracellular. The helical transmembrane segment at isoleucine 330–leucine 363 threads the bilayer. The Cytoplasmic portion of the chain corresponds to phenylalanine 364 to glycine 370. A helical membrane pass occupies residues alanine 371 to serine 399. Over threonine 400–glutamate 401 the chain is Extracellular. Residues tryptophan 402–lysine 420 traverse the membrane as a helical segment. Residues phenylalanine 421–glutamate 446 are Cytoplasmic-facing.

The protein belongs to the major facilitator superfamily. Sugar transporter (TC 2.A.1.1) family.

It localises to the cell membrane. Inhibited by carbonyl cyanide m-chlorophenylhydrazone (CCCP) and by the human glucose transport inhibitors cytochalasin B, phloretin, and forskolin. Its function is as follows. Transporter highly specific for glucose uptake. The chain is Glucose transporter GlcP from Staphylococcus epidermidis (strain ATCC 12228 / FDA PCI 1200).